The sequence spans 75 residues: Small ribosomal subunit protein bS18c (75 aa).

It belongs to the bacterial ribosomal protein bS18 family. Part of the 30S ribosomal subunit.

The protein resides in the plastid. It is found in the chloroplast. This chain is Small ribosomal subunit protein bS18c (rps18), found in Anthoceros angustus (Hornwort).